Consider the following 494-residue polypeptide: Glycerol kinase (494 aa).

ADP is bound at residue Thr-13. ATP is bound by residues Thr-13, Thr-14, and Ser-15. Thr-13 contributes to the sn-glycerol 3-phosphate binding site. Arg-17 lines the ADP pocket. Arg-83, Glu-84, Tyr-135, and Asp-244 together coordinate sn-glycerol 3-phosphate. 5 residues coordinate glycerol: Arg-83, Glu-84, Tyr-135, Asp-244, and Gln-245. ADP is bound by residues Thr-266 and Gly-309. ATP contacts are provided by Thr-266, Gly-309, Gln-313, and Gly-410. ADP is bound by residues Gly-410 and Asn-414.

Belongs to the FGGY kinase family.

The enzyme catalyses glycerol + ATP = sn-glycerol 3-phosphate + ADP + H(+). The protein operates within polyol metabolism; glycerol degradation via glycerol kinase pathway; sn-glycerol 3-phosphate from glycerol: step 1/1. Its activity is regulated as follows. Inhibited by fructose 1,6-bisphosphate (FBP). Its function is as follows. Key enzyme in the regulation of glycerol uptake and metabolism. Catalyzes the phosphorylation of glycerol to yield sn-glycerol 3-phosphate. The protein is Glycerol kinase of Shewanella putrefaciens (strain CN-32 / ATCC BAA-453).